Here is a 470-residue protein sequence, read N- to C-terminus: Argininosuccinate lyase (470 aa).

This sequence belongs to the lyase 1 family. Argininosuccinate lyase subfamily.

The protein resides in the cytoplasm. It carries out the reaction 2-(N(omega)-L-arginino)succinate = fumarate + L-arginine. It participates in amino-acid biosynthesis; L-arginine biosynthesis; L-arginine from L-ornithine and carbamoyl phosphate: step 3/3. In Cupriavidus pinatubonensis (strain JMP 134 / LMG 1197) (Cupriavidus necator (strain JMP 134)), this protein is Argininosuccinate lyase.